The chain runs to 87 residues: Down syndrome critical region protein 10 (87 aa).

As to expression, expressed in placenta and testis.

The protein is Down syndrome critical region protein 10 (DSCR10) of Homo sapiens (Human).